The chain runs to 107 residues: Large ribosomal subunit protein uL24 (107 aa).

It belongs to the universal ribosomal protein uL24 family. Part of the 50S ribosomal subunit.

In terms of biological role, one of two assembly initiator proteins, it binds directly to the 5'-end of the 23S rRNA, where it nucleates assembly of the 50S subunit. Its function is as follows. One of the proteins that surrounds the polypeptide exit tunnel on the outside of the subunit. This is Large ribosomal subunit protein uL24 from Mycobacterium ulcerans (strain Agy99).